A 295-amino-acid polypeptide reads, in one-letter code: Protoheme IX farnesyltransferase (295 aa).

Topologically, residues 1 to 9 (MSVKHFIQI) are cytoplasmic. Residues 10–28 (TKPGIIFGNVLSVAGGFFL) form a helical membrane-spanning segment. Topologically, residues 29-37 (ASKGHVDFA) are periplasmic. Residues 38-56 (LFLAVVIGTSLVVASGCVF) form a helical membrane-spanning segment. Residues 57–78 (NNCIDRDIDHKMERTKNRVMVQ) lie on the Cytoplasmic side of the membrane. Residues 79 to 97 (GGMSLPLALIYATLLGVAG) form a helical membrane-spanning segment. The Periplasmic segment spans residues 98–107 (FSLLYVQANP). A helical membrane pass occupies residues 108–126 (LSAFCALIGFIVYVGFYSL). Residues 127 to 197 (WLKRKSVHGT…YSAANIPVLP (71 aa)) lie on the Cytoplasmic side of the membrane. The chain crosses the membrane as a helical span at residues 198–216 (VARGILAAKKQIVLYVLAF). Topologically, residues 217–228 (VLATLMLTLGGY) are periplasmic. Residues 229–247 (AGLGYLAVAAAMGLYWLYM) form a helical membrane-spanning segment. Over 248–268 (AWGGYKAEDDSKWARKVFGFS) the chain is Cytoplasmic. The helical transmembrane segment at 269-287 (ILTVTALSVMMGVDSQTAA) threads the bilayer. At 288–295 (DVLMTYAR) the chain is on the periplasmic side.

The protein belongs to the UbiA prenyltransferase family. Mg(2+) is required as a cofactor. It depends on Ca(2+) as a cofactor.

It localises to the cell inner membrane. It carries out the reaction heme b + (2E,6E)-farnesyl diphosphate + H2O = Fe(II)-heme o + diphosphate. In terms of biological role, converts protoheme IX and farnesyl diphosphate to heme O. The sequence is that of Protoheme IX farnesyltransferase (cyoE) from Pseudomonas putida (Arthrobacter siderocapsulatus).